A 105-amino-acid chain; its full sequence is Large ribosomal subunit protein bL21 (105 aa).

This sequence belongs to the bacterial ribosomal protein bL21 family. Part of the 50S ribosomal subunit. Contacts protein L20.

Its function is as follows. This protein binds to 23S rRNA in the presence of protein L20. In Aliarcobacter butzleri (strain RM4018) (Arcobacter butzleri), this protein is Large ribosomal subunit protein bL21.